Consider the following 449-residue polypeptide: Tubulin beta chain (449 aa).

Gln-11, Glu-69, Ser-138, Gly-142, Thr-143, Gly-144, Asn-204, and Asn-226 together coordinate GTP. Glu-69 lines the Mg(2+) pocket.

The protein belongs to the tubulin family. Dimer of alpha and beta chains. A typical microtubule is a hollow water-filled tube with an outer diameter of 25 nm and an inner diameter of 15 nM. Alpha-beta heterodimers associate head-to-tail to form protofilaments running lengthwise along the microtubule wall with the beta-tubulin subunit facing the microtubule plus end conferring a structural polarity. Microtubules usually have 13 protofilaments but different protofilament numbers can be found in some organisms and specialized cells. It depends on Mg(2+) as a cofactor.

Its subcellular location is the cytoplasm. It localises to the cytoskeleton. Tubulin is the major constituent of microtubules, a cylinder consisting of laterally associated linear protofilaments composed of alpha- and beta-tubulin heterodimers. Microtubules grow by the addition of GTP-tubulin dimers to the microtubule end, where a stabilizing cap forms. Below the cap, tubulin dimers are in GDP-bound state, owing to GTPase activity of alpha-tubulin. The polypeptide is Tubulin beta chain (TUB2) (Candida albicans (Yeast)).